Consider the following 149-residue polypeptide: MQVILLDKVANLGSLGDQVNVKAGYARNFLVPMGKAVPATKKNVEFFEARRADLEAKLAETLSAAEARAVKINELATVTIASKAGDEGKLFGSIGTRDIADAVTAAGVAVTKSEVRLPNGVLRTLGDHEVHFQVHSDVFAQLNVVVVAE.

This sequence belongs to the bacterial ribosomal protein bL9 family.

Its function is as follows. Binds to the 23S rRNA. The protein is Large ribosomal subunit protein bL9 of Edwardsiella ictaluri (strain 93-146).